A 400-amino-acid polypeptide reads, in one-letter code: Bifunctional enzyme IspD/IspF (400 aa).

The tract at residues 1-235 (MSLWTVLLAA…LAEAAAPPVP (235 aa)) is 2-C-methyl-D-erythritol 4-phosphate cytidylyltransferase. The segment at 236-400 (VTGYGYDVHR…VALVSGWRRP (165 aa)) is 2-C-methyl-D-erythritol 2,4-cyclodiphosphate synthase. The a divalent metal cation site is built by D242 and H244. 4-CDP-2-C-methyl-D-erythritol 2-phosphate contacts are provided by residues 242–244 (DVH) and 276–277 (HS). H284 lines the a divalent metal cation pocket. Residues 298-300 (DIG), 303-307 (FPDSN), 374-377 (TTEE), and F381 contribute to the 4-CDP-2-C-methyl-D-erythritol 2-phosphate site.

The protein in the N-terminal section; belongs to the IspD/TarI cytidylyltransferase family. IspD subfamily. In the C-terminal section; belongs to the IspF family. It depends on a divalent metal cation as a cofactor.

The enzyme catalyses 2-C-methyl-D-erythritol 4-phosphate + CTP + H(+) = 4-CDP-2-C-methyl-D-erythritol + diphosphate. It catalyses the reaction 4-CDP-2-C-methyl-D-erythritol 2-phosphate = 2-C-methyl-D-erythritol 2,4-cyclic diphosphate + CMP. It functions in the pathway isoprenoid biosynthesis; isopentenyl diphosphate biosynthesis via DXP pathway; isopentenyl diphosphate from 1-deoxy-D-xylulose 5-phosphate: step 2/6. The protein operates within isoprenoid biosynthesis; isopentenyl diphosphate biosynthesis via DXP pathway; isopentenyl diphosphate from 1-deoxy-D-xylulose 5-phosphate: step 4/6. Bifunctional enzyme that catalyzes the formation of 4-diphosphocytidyl-2-C-methyl-D-erythritol from CTP and 2-C-methyl-D-erythritol 4-phosphate (MEP) (IspD), and catalyzes the conversion of 4-diphosphocytidyl-2-C-methyl-D-erythritol 2-phosphate (CDP-ME2P) to 2-C-methyl-D-erythritol 2,4-cyclodiphosphate (ME-CPP) with a corresponding release of cytidine 5-monophosphate (CMP) (IspF). The protein is Bifunctional enzyme IspD/IspF of Solidesulfovibrio magneticus (strain ATCC 700980 / DSM 13731 / RS-1) (Desulfovibrio magneticus).